Reading from the N-terminus, the 426-residue chain is Phosphoribosylamine--glycine ligase (426 aa).

The region spanning 107–313 (KDFMQKYGVK…FLNVINSALN (207 aa)) is the ATP-grasp domain. ATP is bound at residue 133-194 (LDKISYPVVI…EEFLDGVEIS (62 aa)). Mg(2+) is bound by residues Glu283 and Asn285.

This sequence belongs to the GARS family. It depends on Mg(2+) as a cofactor. Mn(2+) serves as cofactor.

The enzyme catalyses 5-phospho-beta-D-ribosylamine + glycine + ATP = N(1)-(5-phospho-beta-D-ribosyl)glycinamide + ADP + phosphate + H(+). Its pathway is purine metabolism; IMP biosynthesis via de novo pathway; N(1)-(5-phospho-D-ribosyl)glycinamide from 5-phospho-alpha-D-ribose 1-diphosphate: step 2/2. The sequence is that of Phosphoribosylamine--glycine ligase from Fusobacterium nucleatum subsp. nucleatum (strain ATCC 25586 / DSM 15643 / BCRC 10681 / CIP 101130 / JCM 8532 / KCTC 2640 / LMG 13131 / VPI 4355).